We begin with the raw amino-acid sequence, 97 residues long: YcgL domain-containing protein Pmen_1774 (97 aa).

A YcgL domain is found at 3-87 (RICSIYKSPR…PEEDYIQHLP (85 aa)).

The protein is YcgL domain-containing protein Pmen_1774 of Ectopseudomonas mendocina (strain ymp) (Pseudomonas mendocina).